An 89-amino-acid chain; its full sequence is Small ribosomal subunit protein uS19 (89 aa).

It belongs to the universal ribosomal protein uS19 family.

Its function is as follows. Protein S19 forms a complex with S13 that binds strongly to the 16S ribosomal RNA. The polypeptide is Small ribosomal subunit protein uS19 (Bacteroides fragilis (strain YCH46)).